We begin with the raw amino-acid sequence, 311 residues long: MQENQQITKKEQYNLNKLQKRLRRNVGEAIADFNMIEEGDRIMVCLSGGKDSYTMLEILRNLQQSAPINFSLVAVNLDQKQPGFPEHVLPEYLETLGVEYKIVEENTYGIVKEKIPEGKTTCSLCSRLRRGILYRTATELGATKIALGHHRDDILQTLFLNMFYGGKMKGMPPKLMSDDGKHIVIRPLAYCREKDIQRFADAKAFPIIPCNLCGSQPNLQRQVIADMLRDWDKRYPGRIETMFSAMQNVVPSHLCDTNLFDFKGITHGSEVVNGGDLAFDREEIPLQPSGWQPEEDENQLDELRLNVVEVK.

Residues 47-52 (SGGKDS) carry the PP-loop motif motif. [4Fe-4S] cluster contacts are provided by cysteine 122, cysteine 125, and cysteine 213.

Belongs to the TtcA family. Homodimer. Mg(2+) is required as a cofactor. The cofactor is [4Fe-4S] cluster.

It localises to the cytoplasm. The enzyme catalyses cytidine(32) in tRNA + S-sulfanyl-L-cysteinyl-[cysteine desulfurase] + AH2 + ATP = 2-thiocytidine(32) in tRNA + L-cysteinyl-[cysteine desulfurase] + A + AMP + diphosphate + H(+). The protein operates within tRNA modification. Functionally, catalyzes the ATP-dependent 2-thiolation of cytidine in position 32 of tRNA, to form 2-thiocytidine (s(2)C32). The sulfur atoms are provided by the cysteine/cysteine desulfurase (IscS) system. The polypeptide is tRNA-cytidine(32) 2-sulfurtransferase (Escherichia coli O45:K1 (strain S88 / ExPEC)).